The chain runs to 247 residues: Neurotrophic factor BDNF precursor form (247 aa).

A signal peptide spans 1 to 18 (MTILFLTMVISYFGCMKA). A propeptide spanning residues 19-128 (APMKEASVRG…AANMSMRVRR (110 aa)) is cleaved from the precursor. A glycan (N-linked (GlcNAc...) asparagine) is linked at Asn121. 3 cysteine pairs are disulfide-bonded: Cys141/Cys208, Cys186/Cys237, and Cys196/Cys239.

Belongs to the NGF-beta family. Monomers and homodimers. Binds to NTRK2/TRKB. Can form heterodimers with other neurotrophin family members, such as NTF3 and NTF4 (in vitro), but the physiological relevance of this is not clear. BDNF precursor form: interacts with the heterodimer formed by NGFR and SORCS2. Mature BDNF has much lower affinity for the heterodimer formed by NGFR and SORCS2. Post-translationally, N-glycosylated and glycosulfated, contrary to mature BDNF. In terms of processing, mature BDNF is produced by proteolytic removal of the propeptide, catalyzed by a FURIN family member. In addition, the precursor form is proteolytically cleaved within the propeptide, but this is not an obligatory intermediate for the production of mature BDNF. Can be converted into mature BDNF by plasmin (PLG).

It localises to the secreted. In terms of biological role, important signaling molecule that activates signaling cascades downstream of NTRK2. During development, promotes the survival and differentiation of selected neuronal populations of the peripheral and central nervous systems. Participates in axonal growth, pathfinding and in the modulation of dendritic growth and morphology. Major regulator of synaptic transmission and plasticity at adult synapses in many regions of the CNS. The versatility of BDNF is emphasized by its contribution to a range of adaptive neuronal responses including long-term potentiation (LTP), long-term depression (LTD), certain forms of short-term synaptic plasticity, as well as homeostatic regulation of intrinsic neuronal excitability. The sequence is that of Neurotrophic factor BDNF precursor form (BDNF) from Canis lupus familiaris (Dog).